The following is a 103-amino-acid chain: Defensin-like protein 290 (103 aa).

An N-terminal signal peptide occupies residues 1–29; it reads MTALRRTISIIFVFYLSCTLFVNIFGVQA. Cystine bridges form between C33–C50, C39–C55, C43–C57, C72–C92, C78–C98, and C84–C100.

This sequence belongs to the DEFL family.

It localises to the secreted. The protein is Defensin-like protein 290 of Arabidopsis thaliana (Mouse-ear cress).